Here is a 142-residue protein sequence, read N- to C-terminus: Chorion class A protein Ld19 (142 aa).

Positions 1–18 are cleaved as a signal peptide; the sequence is MNSFALLLVCIQACLVQS.

It belongs to the chorion protein family.

Its function is as follows. This protein is one of many from the eggshell of the gypsy moth. This is Chorion class A protein Ld19 from Lymantria dispar (Gypsy moth).